The primary structure comprises 278 residues: NH(3)-dependent NAD(+) synthetase (278 aa).

Residue 43–50 (GISGGVDS) participates in ATP binding. Asp49 is a binding site for Mg(2+). Residue Arg146 participates in deamido-NAD(+) binding. Thr166 serves as a coordination point for ATP. Mg(2+) is bound at residue Glu171. The deamido-NAD(+) site is built by Lys179 and Asp186. The ATP site is built by Lys195 and Thr217. Residue 266 to 267 (HK) participates in deamido-NAD(+) binding.

This sequence belongs to the NAD synthetase family. As to quaternary structure, homodimer.

The catalysed reaction is deamido-NAD(+) + NH4(+) + ATP = AMP + diphosphate + NAD(+) + H(+). Its pathway is cofactor biosynthesis; NAD(+) biosynthesis; NAD(+) from deamido-NAD(+) (ammonia route): step 1/1. Functionally, catalyzes the ATP-dependent amidation of deamido-NAD to form NAD. Uses ammonia as a nitrogen source. The sequence is that of NH(3)-dependent NAD(+) synthetase from Pseudoalteromonas translucida (strain TAC 125).